The sequence spans 431 residues: Trigger factor (431 aa).

The PPIase FKBP-type domain maps to 161–245 (TDIVIGDVQK…VKEIKRMELP (85 aa)).

Belongs to the FKBP-type PPIase family. Tig subfamily.

Its subcellular location is the cytoplasm. It carries out the reaction [protein]-peptidylproline (omega=180) = [protein]-peptidylproline (omega=0). Involved in protein export. Acts as a chaperone by maintaining the newly synthesized protein in an open conformation. Functions as a peptidyl-prolyl cis-trans isomerase. The polypeptide is Trigger factor (Chloroherpeton thalassium (strain ATCC 35110 / GB-78)).